The chain runs to 149 residues: UPF0260 protein Pmen_1776 (149 aa).

It belongs to the UPF0260 family.

This Ectopseudomonas mendocina (strain ymp) (Pseudomonas mendocina) protein is UPF0260 protein Pmen_1776.